The sequence spans 145 residues: 3-dehydroquinate dehydratase (145 aa).

The active-site Proton acceptor is the Y24. 3 residues coordinate substrate: N75, H81, and D88. H101 functions as the Proton donor in the catalytic mechanism. Substrate is bound by residues 102–103 (IS) and R112.

Belongs to the type-II 3-dehydroquinase family. As to quaternary structure, homododecamer.

The enzyme catalyses 3-dehydroquinate = 3-dehydroshikimate + H2O. The protein operates within metabolic intermediate biosynthesis; chorismate biosynthesis; chorismate from D-erythrose 4-phosphate and phosphoenolpyruvate: step 3/7. Catalyzes a trans-dehydration via an enolate intermediate. The chain is 3-dehydroquinate dehydratase from Corynebacterium glutamicum (strain R).